The primary structure comprises 356 residues: Tyrosine recombinase XerS (356 aa).

The Core-binding (CB) domain maps to 16-121; the sequence is LMPWYVLEYY…ALSSLYKYLT (106 aa). The Tyr recombinase domain occupies 169-354; the sequence is GFLTYIDQEH…VSDEQKNALD (186 aa). Residues arginine 210, lysine 234, histidine 306, arginine 309, and histidine 332 contribute to the active site. The active-site O-(3'-phospho-DNA)-tyrosine intermediate is the tyrosine 341.

The protein belongs to the 'phage' integrase family. XerS subfamily.

It localises to the cytoplasm. Its activity is regulated as follows. FtsK is required for recombination. Its function is as follows. Site-specific tyrosine recombinase, which acts by catalyzing the cutting and rejoining of the recombining DNA molecules. Essential to convert dimers of the bacterial chromosome into monomers to permit their segregation at cell division. In Streptococcus pneumoniae serotype 4 (strain ATCC BAA-334 / TIGR4), this protein is Tyrosine recombinase XerS.